The chain runs to 75 residues: Conotoxin Vn5.6 (75 aa).

The signal sequence occupies residues 1 to 19; sequence MLCLPVFIILLLLASPAAP. The propeptide occupies 20 to 59; the sequence is NPLEKRIQSDLIRAALEDADMKTGEREILNIIDSISDVAK. Q60 is subject to Pyrrolidone carboxylic acid.

Belongs to the conotoxin T superfamily. In terms of processing, contains 2 disulfide bonds that can be either 'C1-C3, C2-C4' or 'C1-C4, C2-C3', since these disulfide connectivities have been observed for conotoxins with cysteine framework V (for examples, see AC P0DQQ7 and AC P81755). As to expression, expressed by the venom duct.

Its subcellular location is the secreted. This Conus ventricosus (Mediterranean cone) protein is Conotoxin Vn5.6.